We begin with the raw amino-acid sequence, 147 residues long: Large ribosomal subunit protein uL13 (147 aa).

Belongs to the universal ribosomal protein uL13 family. In terms of assembly, part of the 50S ribosomal subunit.

In terms of biological role, this protein is one of the early assembly proteins of the 50S ribosomal subunit, although it is not seen to bind rRNA by itself. It is important during the early stages of 50S assembly. This Streptomyces griseus subsp. griseus (strain JCM 4626 / CBS 651.72 / NBRC 13350 / KCC S-0626 / ISP 5235) protein is Large ribosomal subunit protein uL13.